A 347-amino-acid polypeptide reads, in one-letter code: MKMEEMSLSGLDNSKLEAIAQEIYADLVEDSCLGFCFEVHRAVKCGYFFLDDTDPDSMKDFEIVDQPGLDIFGQVFNQWKSKECVCPNCSRSIAASRFAPHLEKCLGMGRNSSRIANRRIANSNNMNKSESDQEDNDDINDNDWSYGSEKKAKKRKSDKNPNSPRRSKSLKHKNGELSNSDPFKYNNSTGISYETLGPEELRSLLTTQCGVISEHTKKMCTRSLRCPQHTDEQRRTVRIYFLGPSAVLPEVESSLDNDSFDMTDSQALISRLQWDGSSDLSPSDSGSSKTSENQGWGLGTNSSESRKTKKKKSHLSLVGTASGLGSNKKKKPKPPAPPTPSIYDDIN.

The SGF11-type zinc finger occupies 84–105; the sequence is CVCPNCSRSIAASRFAPHLEKC. Positions 116–125 are enriched in low complexity; the sequence is ANRRIANSNN. A disordered region spans residues 116-184; that stretch reads ANRRIANSNN…GELSNSDPFK (69 aa). Residues Ser-129 and Ser-131 each carry the phosphoserine modification. The span at 132-141 shows a compositional bias: acidic residues; that stretch reads DQEDNDDIND. In terms of domain architecture, SCA7 spans 196–263; it reads LGPEELRSLL…SLDNDSFDMT (68 aa). The span at 275–288 shows a compositional bias: low complexity; sequence DGSSDLSPSDSGSS. Residues 275 to 347 are disordered; the sequence is DGSSDLSPSD…PTPSIYDDIN (73 aa). A phosphoserine mark is found at Ser-278, Ser-281, and Ser-326.

This sequence belongs to the SGF11 family. In terms of assembly, component of some SAGA transcription coactivator-HAT complexes, at least composed of ATXN7, ATXN7L3, ENY2, GCN5L2, SUPT3H, TAF10, TRRAP and USP22. Within the SAGA complex, ENY2, ATXN7, ATXN7L3, and USP22 form an additional subcomplex of SAGA called the DUB module (deubiquitination module). Interacts directly with ENY2 and USP22.

It is found in the nucleus. Its function is as follows. Component of the transcription regulatory histone acetylation (HAT) complex SAGA, a multiprotein complex that activates transcription by remodeling chromatin and mediating histone acetylation and deubiquitination. Within the SAGA complex, participates in a subcomplex that specifically deubiquitinates both histones H2A and H2B. The SAGA complex is recruited to specific gene promoters by activators such as MYC, where it is required for transcription. Required for nuclear receptor-mediated transactivation. Within the complex, it is required to recruit USP22 and ENY2 into the SAGA complex. Regulates H2B monoubiquitination (H2Bub1) levels. Affects subcellular distribution of ENY2, USP22 and ATXN7L3B. The sequence is that of Ataxin-7-like protein 3 from Homo sapiens (Human).